An 894-amino-acid polypeptide reads, in one-letter code: Valine--tRNA ligase (894 aa).

The short motif at 48–58 (PNVTGFLHMGH) is the 'HIGH' region element. The short motif at 527–531 (KMSKS) is the 'KMSKS' region element. K530 contacts ATP. A coiled-coil region spans residues 827–852 (LVDFDEEVKRINKSIEKLTRDIGMLS).

Belongs to the class-I aminoacyl-tRNA synthetase family. ValS type 1 subfamily. As to quaternary structure, monomer.

Its subcellular location is the cytoplasm. It carries out the reaction tRNA(Val) + L-valine + ATP = L-valyl-tRNA(Val) + AMP + diphosphate. Catalyzes the attachment of valine to tRNA(Val). As ValRS can inadvertently accommodate and process structurally similar amino acids such as threonine, to avoid such errors, it has a 'posttransfer' editing activity that hydrolyzes mischarged Thr-tRNA(Val) in a tRNA-dependent manner. In Bdellovibrio bacteriovorus (strain ATCC 15356 / DSM 50701 / NCIMB 9529 / HD100), this protein is Valine--tRNA ligase.